Reading from the N-terminus, the 389-residue chain is Succinate--CoA ligase [ADP-forming] subunit beta (389 aa).

In terms of domain architecture, ATP-grasp spans 9–244; the sequence is KQLLAEYGIP…KTQEDPTEVI (236 aa). Residues lysine 46, 53 to 55, glycine 102, and glutamate 107 each bind ATP; that span reads GRG. Mg(2+) is bound by residues asparagine 199 and aspartate 213. Substrate is bound by residues asparagine 264 and 321–323; that span reads GIV.

It belongs to the succinate/malate CoA ligase beta subunit family. As to quaternary structure, heterotetramer of two alpha and two beta subunits. The cofactor is Mg(2+).

The enzyme catalyses succinate + ATP + CoA = succinyl-CoA + ADP + phosphate. The catalysed reaction is GTP + succinate + CoA = succinyl-CoA + GDP + phosphate. It functions in the pathway carbohydrate metabolism; tricarboxylic acid cycle; succinate from succinyl-CoA (ligase route): step 1/1. Succinyl-CoA synthetase functions in the citric acid cycle (TCA), coupling the hydrolysis of succinyl-CoA to the synthesis of either ATP or GTP and thus represents the only step of substrate-level phosphorylation in the TCA. The beta subunit provides nucleotide specificity of the enzyme and binds the substrate succinate, while the binding sites for coenzyme A and phosphate are found in the alpha subunit. This is Succinate--CoA ligase [ADP-forming] subunit beta from Stenotrophomonas maltophilia (strain R551-3).